A 479-amino-acid polypeptide reads, in one-letter code: Aspartyl/glutamyl-tRNA(Asn/Gln) amidotransferase subunit B (479 aa).

It belongs to the GatB/GatE family. GatB subfamily. As to quaternary structure, heterotrimer of A, B and C subunits.

It carries out the reaction L-glutamyl-tRNA(Gln) + L-glutamine + ATP + H2O = L-glutaminyl-tRNA(Gln) + L-glutamate + ADP + phosphate + H(+). The catalysed reaction is L-aspartyl-tRNA(Asn) + L-glutamine + ATP + H2O = L-asparaginyl-tRNA(Asn) + L-glutamate + ADP + phosphate + 2 H(+). In terms of biological role, allows the formation of correctly charged Asn-tRNA(Asn) or Gln-tRNA(Gln) through the transamidation of misacylated Asp-tRNA(Asn) or Glu-tRNA(Gln) in organisms which lack either or both of asparaginyl-tRNA or glutaminyl-tRNA synthetases. The reaction takes place in the presence of glutamine and ATP through an activated phospho-Asp-tRNA(Asn) or phospho-Glu-tRNA(Gln). The chain is Aspartyl/glutamyl-tRNA(Asn/Gln) amidotransferase subunit B from Streptococcus pyogenes serotype M6 (strain ATCC BAA-946 / MGAS10394).